Here is a 150-residue protein sequence, read N- to C-terminus: Large ribosomal subunit protein bL9 (150 aa).

It belongs to the bacterial ribosomal protein bL9 family.

In terms of biological role, binds to the 23S rRNA. The polypeptide is Large ribosomal subunit protein bL9 (Burkholderia multivorans (strain ATCC 17616 / 249)).